A 271-amino-acid polypeptide reads, in one-letter code: Exosome complex component Rrp42 (271 aa).

It belongs to the RNase PH family. Rrp42 subfamily. In terms of assembly, component of the archaeal exosome complex. Forms a hexameric ring-like arrangement composed of 3 Rrp41-Rrp42 heterodimers. The hexameric ring associates with a trimer of Rrp4 and/or Csl4 subunits.

The protein localises to the cytoplasm. In terms of biological role, non-catalytic component of the exosome, which is a complex involved in RNA degradation. Contributes to the structuring of the Rrp41 active site. The protein is Exosome complex component Rrp42 of Methanothermobacter thermautotrophicus (strain ATCC 29096 / DSM 1053 / JCM 10044 / NBRC 100330 / Delta H) (Methanobacterium thermoautotrophicum).